Here is a 71-residue protein sequence, read N- to C-terminus: Cruzioseptin-2 (71 aa).

The N-terminal stretch at 1-22 (MAFLKKSLFLVLFLGLVSLSIC) is a signal peptide. The propeptide occupies 23–43 (EEEKREEENEEVQEDDDQSEE). Gln68 bears the Glutamine amide mark. Residues 70-71 (EQ) constitute a propeptide that is removed on maturation.

As to expression, expressed by the skin glands.

Its subcellular location is the secreted. In terms of biological role, has antimicrobial activity against Gram-negative bacterium E.coli (MIC=26.35 uM), against Gram-positive bacterium S.aureus (MIC=6.59 uM) and against fungus C.albicans (MIC=13.18 uM). At higher concentrations also has a bactericidal and fungicidal effect. Has hemagglutinating activity against horse erythrocytes. This Cruziohyla calcarifer (Splendid leaf frog) protein is Cruzioseptin-2.